A 65-amino-acid chain; its full sequence is Large ribosomal subunit protein uL29 (65 aa).

Belongs to the universal ribosomal protein uL29 family.

The polypeptide is Large ribosomal subunit protein uL29 (Bacteroides fragilis (strain ATCC 25285 / DSM 2151 / CCUG 4856 / JCM 11019 / LMG 10263 / NCTC 9343 / Onslow / VPI 2553 / EN-2)).